A 552-amino-acid polypeptide reads, in one-letter code: Protein FAM234A (552 aa).

Residues 1–40 (MMDDKDLEAEIHPLKNEDKKSQENLGNLPKTEDNLKNKPV) are disordered. At 1 to 49 (MMDDKDLEAEIHPLKNEDKKSQENLGNLPKTEDNLKNKPVPSRLSRCRT) the chain is on the cytoplasmic side. Residues 8–22 (EAEIHPLKNEDKKSQ) are compositionally biased toward basic and acidic residues. Residue Ser21 is modified to Phosphoserine. A helical; Signal-anchor for type II membrane protein membrane pass occupies residues 50-70 (VAFFLSLFICLFVVFVLSFII). At 71-552 (PCPDRPSSED…FSRLRYRSEV (482 aa)) the chain is on the extracellular side. Residues Asn116, Asn119, Asn314, and Asn473 are each glycosylated (N-linked (GlcNAc...) asparagine).

It belongs to the FAM234 family.

The protein localises to the membrane. The chain is Protein FAM234A (Fam234a) from Rattus norvegicus (Rat).